Reading from the N-terminus, the 431-residue chain is Histidine--tRNA ligase (431 aa).

This sequence belongs to the class-II aminoacyl-tRNA synthetase family. In terms of assembly, homodimer.

The protein localises to the cytoplasm. The enzyme catalyses tRNA(His) + L-histidine + ATP = L-histidyl-tRNA(His) + AMP + diphosphate + H(+). The chain is Histidine--tRNA ligase from Limosilactobacillus fermentum (strain NBRC 3956 / LMG 18251) (Lactobacillus fermentum).